Here is a 297-residue protein sequence, read N- to C-terminus: F-box only protein 2 (297 aa).

Positions 1 to 47 are disordered; the sequence is MDGDGDPESVSHPEEASPEEQPEEAGAEASAEEEQLREAEEEEEAEA. Positions 16–47 are enriched in acidic residues; it reads ASPEEQPEEAGAEASAEEEQLREAEEEEEAEA. Residues 48 to 95 enclose the F-box domain; the sequence is VEYLAELPEPLLLRVLAELPATELVQACRLVCLRWKELVDGAPLWLLK. Ser-106 bears the Phosphoserine mark. The region spanning 117 to 297 is the FBA domain; sequence FYFLSKRRRN…VTNSSVWVEP (181 aa). A carbohydrate contacts are provided by residues 214–216 and 279–280; these read RTD and YW.

As to quaternary structure, component of the SCF(FBXO2) complex consisting of CUL1, RBX1, SKP1 and FBXO2. Predominantly detected as heterodimer with SKP1; the heterodimer with SKP1 is not part of the SCF(FBXO2) complex. In terms of tissue distribution, detected in brain and cochlea, in epithelial support cells and hair cells of the organ of Corti (at protein level).

The protein resides in the cytoplasm. Its subcellular location is the microsome membrane. The protein operates within protein modification; protein ubiquitination. In terms of biological role, substrate recognition component of a SCF (SKP1-CUL1-F-box protein) E3 ubiquitin-protein ligase complex that mediates the ubiquitination and subsequent proteasomal degradation of target proteins. Involved in the endoplasmic reticulum-associated degradation pathway (ERAD) for misfolded lumenal proteins by recognizing and binding sugar chains on unfolded glycoproteins that are retrotranslocated into the cytosol and promoting their ubiquitination and subsequent degradation. Prevents formation of cytosolic aggregates of unfolded glycoproteins that have been retrotranslocated into the cytosol. Able to recognize and bind denatured glycoproteins, preferentially those of the high-mannose type. This chain is F-box only protein 2 (Fbxo2), found in Mus musculus (Mouse).